An 83-amino-acid chain; its full sequence is Cell division topological specificity factor (83 aa).

The protein belongs to the MinE family.

Its function is as follows. Prevents the cell division inhibition by proteins MinC and MinD at internal division sites while permitting inhibition at polar sites. This ensures cell division at the proper site by restricting the formation of a division septum at the midpoint of the long axis of the cell. The chain is Cell division topological specificity factor from Marinobacter nauticus (strain ATCC 700491 / DSM 11845 / VT8) (Marinobacter aquaeolei).